Here is a 292-residue protein sequence, read N- to C-terminus: Elongation factor Ts (292 aa).

Positions 80–83 (TDFV) are involved in Mg(2+) ion dislocation from EF-Tu.

The protein belongs to the EF-Ts family.

Its subcellular location is the cytoplasm. Functionally, associates with the EF-Tu.GDP complex and induces the exchange of GDP to GTP. It remains bound to the aminoacyl-tRNA.EF-Tu.GTP complex up to the GTP hydrolysis stage on the ribosome. The protein is Elongation factor Ts of Cupriavidus pinatubonensis (strain JMP 134 / LMG 1197) (Cupriavidus necator (strain JMP 134)).